Reading from the N-terminus, the 128-residue chain is Cytochrome c-type biogenesis protein CcmE (128 aa).

The Cytoplasmic segment spans residues Met-1–Arg-8. The chain crosses the membrane as a helical; Signal-anchor for type II membrane protein span at residues Leu-9–Asn-29. At Leu-30–Arg-128 the chain is on the periplasmic side. The heme site is built by His-120 and Tyr-124.

This sequence belongs to the CcmE/CycJ family.

The protein resides in the cell inner membrane. In terms of biological role, heme chaperone required for the biogenesis of c-type cytochromes. Transiently binds heme delivered by CcmC and transfers the heme to apo-cytochromes in a process facilitated by CcmF and CcmH. This Rickettsia canadensis (strain McKiel) protein is Cytochrome c-type biogenesis protein CcmE.